Consider the following 459-residue polypeptide: ATP-dependent protease ATPase subunit HslU (459 aa).

Residues Val-26, 68–73 (GVGKTE), Asp-271, Glu-337, and Arg-409 each bind ATP.

The protein belongs to the ClpX chaperone family. HslU subfamily. As to quaternary structure, a double ring-shaped homohexamer of HslV is capped on each side by a ring-shaped HslU homohexamer. The assembly of the HslU/HslV complex is dependent on binding of ATP.

It is found in the cytoplasm. In terms of biological role, ATPase subunit of a proteasome-like degradation complex; this subunit has chaperone activity. The binding of ATP and its subsequent hydrolysis by HslU are essential for unfolding of protein substrates subsequently hydrolyzed by HslV. HslU recognizes the N-terminal part of its protein substrates and unfolds these before they are guided to HslV for hydrolysis. The polypeptide is ATP-dependent protease ATPase subunit HslU (Xylella fastidiosa (strain M23)).